A 75-amino-acid chain; its full sequence is CLAVATA3/ESR (CLE)-related protein 33 (75 aa).

The N-terminal stretch at 1 to 22 (MASWRMLCFVLLFTSILICHDA) is a signal peptide. Hydroxyproline occurs at positions 67 and 70. Pro70 carries O-linked (Ara...) hydroxyproline glycosylation.

Belongs to the CLV3/ESR signal peptide family. Post-translationally, the O-glycosylation (arabinosylation) of the hydroxyproline Pro-70 enhances binding affinity of the CLE33p peptide for its receptor. In terms of tissue distribution, expressed in root vasculature.

It is found in the secreted. Its subcellular location is the extracellular space. Signaling peptide involved in the regulation of root colonization by arbuscular mycorrhizal (AM) fungi. Moves from root to shoot to function with the receptor kinase SUNN, in a signaling pathway that repress strigolactone biosynthetic genes and strigolactone content in the roots, and consequently reduces the promotion of further colonization by AM fungi. This is CLAVATA3/ESR (CLE)-related protein 33 from Medicago truncatula (Barrel medic).